A 433-amino-acid polypeptide reads, in one-letter code: Phosphomethylpyrimidine synthase 1 (433 aa).

Residues M95, Y124, H163, 185 to 187 (SRG), 226 to 229 (NAMR), and E265 each bind substrate. Zn(2+) is bound at residue H269. Position 292 (Y292) interacts with substrate. Position 333 (H333) interacts with Zn(2+). Positions 408, 411, and 415 each coordinate [4Fe-4S] cluster.

Belongs to the ThiC family. [4Fe-4S] cluster is required as a cofactor.

The enzyme catalyses 5-amino-1-(5-phospho-beta-D-ribosyl)imidazole + S-adenosyl-L-methionine = 4-amino-2-methyl-5-(phosphooxymethyl)pyrimidine + CO + 5'-deoxyadenosine + formate + L-methionine + 3 H(+). The protein operates within cofactor biosynthesis; thiamine diphosphate biosynthesis. Its function is as follows. Catalyzes the synthesis of the hydroxymethylpyrimidine phosphate (HMP-P) moiety of thiamine from aminoimidazole ribotide (AIR) in a radical S-adenosyl-L-methionine (SAM)-dependent reaction. This is Phosphomethylpyrimidine synthase 1 from Methanothermobacter thermautotrophicus (strain ATCC 29096 / DSM 1053 / JCM 10044 / NBRC 100330 / Delta H) (Methanobacterium thermoautotrophicum).